We begin with the raw amino-acid sequence, 424 residues long: Hydrolase ORFZ (424 aa).

The active-site Nucleophile is the S243.

It belongs to the AB hydrolase superfamily. FUS2 hydrolase family. As to quaternary structure, homodimer.

It participates in secondary metabolite biosynthesis. Its function is as follows. Hydrolyase; part of the gene cluster that mediates the biosynthesis of a tyrosine-derived cytochalasan acting as a fungal signal recognized by resistant rice plants and leads to avirulence in Pi33 resistant rice cultivars. The first step in the pathway is catalyzed by the hybrid PKS-NRPS ACE1, assisted by the enoyl reductase RAP1, that are responsible for fusion of the tyrosine precursor and the polyketide backbone. The polyketide synthase module (PKS) of ACE1 is responsible for the synthesis of the polyketide backbone and the downstream nonribosomal peptide synthetase (NRPS) amidates the carboxyl end of the polyketide with the tyrosine precursor. Because ACE1 lacks a designated enoylreductase (ER) domain, the required activity is provided the enoyl reductase RAP1. Reduction by the hydrolyase ORFZ, followed by dehydration and intra-molecular Diels-Alder cyclization by the Diels-Alderase ORF3 then yield the required isoindolone-fused macrocycle. A number of oxidative steps catalyzed by the tailoring enzymes identified within the cluster, including cytochrome P450 monooxygenases CYP1 to CYP4, the FAD-linked oxidoreductase OXR2 and the short-chain dehydrogenase/reductase OXR1, are further required to afford the final cytochalasans that confer avirulence and which have still to be identified. The monooxygenase CYP1 has been shown to be a site-selective C-18 hydroxylase whereas the function of CYP3 is the site-selective epoxidation of the C-6/C-7 olefin that is present in some intermediate compounds. Finally, SYN2 and RAP2 are not required for avirulence in Pi33 resistant rice cultivars. The protein is Hydrolase ORFZ of Pyricularia oryzae (strain 70-15 / ATCC MYA-4617 / FGSC 8958) (Rice blast fungus).